A 407-amino-acid chain; its full sequence is MCDEANPAKPWQLPDVVYGNGIPALCLLHQEIEQFYNYIRSTPTEFCLRAGAVRRIEDVVLSIWPSASVDLFGSFRTGLNLPDSDIDLVVYYKFWNPRLLHELQNELVSQGVTDPDTVTVLDKASVPVVKFTDLISRIRFDVTFNSVASGVQAADLIKDFIRHFPELPKLVMVLKQFLSLHGFNEVYNSGGVSSYALTLMVISFLQQHARSNRRLSEHSKLALLLIQFLDYYGRKFDFFKYGISVLGQGGCVEKARLRSTLGENNWQSVLCIEDPVTPTNDIGRSSYGVLGVMQGFGAAFVKLSKLVDSDSSKIVGPILANIVEVPQSIINYRAWVHYNFQHLLTPELPCADSLVQPSPTGSTSPSASASASEDERSGGPATIGFGRCDDPPQNIDIVADLANLKMN.

Residues Asp85 and Asp87 each coordinate Mg(2+). The PAP-associated domain maps to 221-280 (LALLLIQFLDYYGRKFDFFKYGISVLGQGGCVEKARLRSTLGENNWQSVLCIEDPVTPTN). Residues 354 to 390 (LVQPSPTGSTSPSASASASEDERSGGPATIGFGRCDD) form a disordered region. The segment covering 357–371 (PSPTGSTSPSASASA) has biased composition (low complexity).

The protein belongs to the DNA polymerase type-B-like family.

The chain is Inactive non-canonical poly(A) RNA polymerase protein Trf4-2 from Drosophila melanogaster (Fruit fly).